Here is a 502-residue protein sequence, read N- to C-terminus: ATP synthase subunit alpha (502 aa).

169–176 lines the ATP pocket; sequence GDRQTGKT.

It belongs to the ATPase alpha/beta chains family. F-type ATPases have 2 components, CF(1) - the catalytic core - and CF(0) - the membrane proton channel. CF(1) has five subunits: alpha(3), beta(3), gamma(1), delta(1), epsilon(1). CF(0) has three main subunits: a(1), b(2) and c(9-12). The alpha and beta chains form an alternating ring which encloses part of the gamma chain. CF(1) is attached to CF(0) by a central stalk formed by the gamma and epsilon chains, while a peripheral stalk is formed by the delta and b chains.

The protein resides in the cell membrane. It catalyses the reaction ATP + H2O + 4 H(+)(in) = ADP + phosphate + 5 H(+)(out). Functionally, produces ATP from ADP in the presence of a proton gradient across the membrane. The alpha chain is a regulatory subunit. The chain is ATP synthase subunit alpha from Streptococcus pyogenes serotype M12 (strain MGAS9429).